A 250-amino-acid polypeptide reads, in one-letter code: Acetylglutamate kinase (250 aa).

Residues 41 to 42, Arg-63, and Asn-156 contribute to the substrate site; that span reads GG.

The protein belongs to the acetylglutamate kinase family. ArgB subfamily.

The protein resides in the cytoplasm. It catalyses the reaction N-acetyl-L-glutamate + ATP = N-acetyl-L-glutamyl 5-phosphate + ADP. It functions in the pathway amino-acid biosynthesis; L-arginine biosynthesis; N(2)-acetyl-L-ornithine from L-glutamate: step 2/4. In terms of biological role, catalyzes the ATP-dependent phosphorylation of N-acetyl-L-glutamate. The polypeptide is Acetylglutamate kinase (Listeria monocytogenes serotype 4a (strain HCC23)).